Reading from the N-terminus, the 361-residue chain is MTQVYNFSAGPAMLPVEVLRRAEQELRNWHGLGTSVMEISHRSKEFMQVAEEAEKDLRDLMQIPANYKVLFCHGGARAQFAAVPLNLLGDSRSADYIDGGYWAHSAVKEAQKYCTPNVIDVTTHDNGVTGIAPMKQWKLSDNAAYVHYCPNETIDGLAINEEPDFGNKVVVADYSSSILSRPIDVSRYGVIYAGAQKNIGPAGLTVVIVREDLLGKARTELPSILDYKVLAENDSMFNTPPTFAWYLSGLVFKWLKEQGGLGEMGKRNQAKAELLYGAIDRTDFYRNQVATANRSWMNVPFQMIDPSLDKLFLSEAEAQGLQALKGHRVAGGMRASIYNAMPIEGVKALTDFMAEFERRHG.

Arg42 serves as a coordination point for L-glutamate. Residues 76-77 (AR), Trp102, Thr153, Asp173, and Gln196 contribute to the pyridoxal 5'-phosphate site. N6-(pyridoxal phosphate)lysine is present on Lys197. 238–239 (NT) is a pyridoxal 5'-phosphate binding site.

Belongs to the class-V pyridoxal-phosphate-dependent aminotransferase family. SerC subfamily. In terms of assembly, homodimer. Pyridoxal 5'-phosphate serves as cofactor.

The protein localises to the cytoplasm. It carries out the reaction O-phospho-L-serine + 2-oxoglutarate = 3-phosphooxypyruvate + L-glutamate. It catalyses the reaction 4-(phosphooxy)-L-threonine + 2-oxoglutarate = (R)-3-hydroxy-2-oxo-4-phosphooxybutanoate + L-glutamate. Its pathway is amino-acid biosynthesis; L-serine biosynthesis; L-serine from 3-phospho-D-glycerate: step 2/3. It participates in cofactor biosynthesis; pyridoxine 5'-phosphate biosynthesis; pyridoxine 5'-phosphate from D-erythrose 4-phosphate: step 3/5. In terms of biological role, catalyzes the reversible conversion of 3-phosphohydroxypyruvate to phosphoserine and of 3-hydroxy-2-oxo-4-phosphonooxybutanoate to phosphohydroxythreonine. The chain is Phosphoserine aminotransferase from Yersinia enterocolitica serotype O:8 / biotype 1B (strain NCTC 13174 / 8081).